We begin with the raw amino-acid sequence, 485 residues long: Putative aldehyde dehydrogenase AldY (485 aa).

Position 231–236 (231–236) interacts with NAD(+); it reads GSTAVG. Residues E253 and C287 contribute to the active site.

Belongs to the aldehyde dehydrogenase family.

It catalyses the reaction an aldehyde + NAD(+) + H2O = a carboxylate + NADH + 2 H(+). Its function is as follows. May contribute to protect cells against stress due to ethanol and related compounds. The protein is Putative aldehyde dehydrogenase AldY (aldY) of Bacillus subtilis (strain 168).